A 309-amino-acid chain; its full sequence is Transcriptional regulator HilD (309 aa).

Residues 209–306 (ERVYNIISSS…KTTPSTFIKM (98 aa)) enclose the HTH araC/xylS-type domain. 2 consecutive DNA-binding regions (H-T-H motif) follow at residues 226–247 (TDVADHIFMSTSTLKRKLAEEG) and 273–296 (VNAVALKCGYDSTSYFIQCFKKYF).

In Salmonella typhimurium (strain SL1344), this protein is Transcriptional regulator HilD (hilD).